The primary structure comprises 406 residues: Dual-specificity RNA methyltransferase RlmN (406 aa).

The active-site Proton acceptor is the glutamate 119. The 246-residue stretch at aspartate 125–aspartate 370 folds into the Radical SAM core domain. A disulfide bond links cysteine 132 and cysteine 375. The [4Fe-4S] cluster site is built by cysteine 139, cysteine 143, and cysteine 146. S-adenosyl-L-methionine is bound by residues glycine 192–glutamate 193, serine 224, serine 246–histidine 248, and asparagine 332. The active-site S-methylcysteine intermediate is the cysteine 375.

Belongs to the radical SAM superfamily. RlmN family. The cofactor is [4Fe-4S] cluster.

The protein localises to the cytoplasm. It carries out the reaction adenosine(2503) in 23S rRNA + 2 reduced [2Fe-2S]-[ferredoxin] + 2 S-adenosyl-L-methionine = 2-methyladenosine(2503) in 23S rRNA + 5'-deoxyadenosine + L-methionine + 2 oxidized [2Fe-2S]-[ferredoxin] + S-adenosyl-L-homocysteine. It catalyses the reaction adenosine(37) in tRNA + 2 reduced [2Fe-2S]-[ferredoxin] + 2 S-adenosyl-L-methionine = 2-methyladenosine(37) in tRNA + 5'-deoxyadenosine + L-methionine + 2 oxidized [2Fe-2S]-[ferredoxin] + S-adenosyl-L-homocysteine. Its function is as follows. Specifically methylates position 2 of adenine 2503 in 23S rRNA and position 2 of adenine 37 in tRNAs. m2A2503 modification seems to play a crucial role in the proofreading step occurring at the peptidyl transferase center and thus would serve to optimize ribosomal fidelity. The chain is Dual-specificity RNA methyltransferase RlmN from Xylella fastidiosa (strain 9a5c).